A 35-amino-acid polypeptide reads, in one-letter code: Tamulustoxin (35 aa).

3 disulfide bridges follow: C2–C22, C7–C31, and C11–C33.

In terms of tissue distribution, expressed by the venom gland.

The protein localises to the secreted. In terms of biological role, blocks Kv1.6/KCNA6 potassium channels. This chain is Tamulustoxin, found in Hottentotta tamulus (Eastern Indian scorpion).